Consider the following 458-residue polypeptide: Putative long chain fatty acid-CoA ligase VraA (458 aa).

The protein belongs to the ATP-dependent AMP-binding enzyme family.

The sequence is that of Putative long chain fatty acid-CoA ligase VraA (vraA) from Staphylococcus aureus (strain Mu3 / ATCC 700698).